A 488-amino-acid chain; its full sequence is Ribulose bisphosphate carboxylase large chain (488 aa).

Asparagine 127 and threonine 177 together coordinate substrate. Lysine 179 functions as the Proton acceptor in the catalytic mechanism. Lysine 181 contributes to the substrate binding site. Mg(2+) is bound by residues lysine 205, aspartate 207, and glutamate 208. Lysine 205 is subject to N6-carboxylysine. Residue histidine 297 is the Proton acceptor of the active site. Positions 298, 330, and 382 each coordinate substrate.

Belongs to the RuBisCO large chain family. Type I subfamily. In terms of assembly, heterohexadecamer of 8 large chains and 8 small chains. Mg(2+) is required as a cofactor.

The protein resides in the plastid. The protein localises to the chloroplast. The enzyme catalyses 2 (2R)-3-phosphoglycerate + 2 H(+) = D-ribulose 1,5-bisphosphate + CO2 + H2O. The catalysed reaction is D-ribulose 1,5-bisphosphate + O2 = 2-phosphoglycolate + (2R)-3-phosphoglycerate + 2 H(+). RuBisCO catalyzes two reactions: the carboxylation of D-ribulose 1,5-bisphosphate, the primary event in carbon dioxide fixation, as well as the oxidative fragmentation of the pentose substrate in the photorespiration process. Both reactions occur simultaneously and in competition at the same active site. This Pyropia haitanensis (Red seaweed) protein is Ribulose bisphosphate carboxylase large chain (rbcL).